A 967-amino-acid polypeptide reads, in one-letter code: Leucine-rich repeat receptor-like protein kinase PXC2 (967 aa).

A signal peptide spans 1-20 (MFNGAVSLLFLFLAVVSARA). Residues 21–609 (DPTFNDDVLG…QIRKSVLSIS (589 aa)) lie on the Extracellular side of the membrane. 11 LRR repeats span residues 91–114 (LQFL…EFPH), 115–139 (LGSL…FFEQ), 141–164 (GSLR…LSYC), 165–189 (STLT…WFLK), 191–212 (LKSL…LGGL), 214–236 (DLRH…IGRC), 237–260 (SSLK…MKSL), 262–284 (SCSS…IGDI), 285–307 (ATLE…SLGN), 308–332 (LEFL…LSNC), and 334–356 (NLIS…MFTG). Asparagine 103 and asparagine 127 each carry an N-linked (GlcNAc...) asparagine glycan. An N-linked (GlcNAc...) asparagine glycan is attached at asparagine 171. N-linked (GlcNAc...) asparagine glycosylation occurs at asparagine 219. 3 N-linked (GlcNAc...) asparagine glycosylation sites follow: asparagine 296, asparagine 315, and asparagine 331. Residue asparagine 374 is glycosylated (N-linked (GlcNAc...) asparagine). 7 LRR repeats span residues 384–408 (LQGL…IWIL), 410–432 (SLLQ…IGGL), 433–456 (KVAE…IGGA), 457–480 (VSLK…ISNC), 482–503 (ALNT…SIGS), 504–528 (LSNL…IEKL), and 530–552 (HLLT…GFFN). 9 N-linked (GlcNAc...) asparagine glycosylation sites follow: asparagine 415, asparagine 446, asparagine 479, asparagine 487, asparagine 516, asparagine 535, asparagine 540, asparagine 571, and asparagine 587. The chain crosses the membrane as a helical span at residues 610–630 (ALIAIGAAAVIAIGVVAVTLL). Residues 631-967 (NVHARSSVSR…LIQCPSHDLE (337 aa)) are Cytoplasmic-facing. In terms of domain architecture, Protein kinase spans 687 to 959 (LNKDSELGRG…EEVVKILELI (273 aa)). Residues 693-701 (LGRGGFGVV) and lysine 715 contribute to the ATP site.

This sequence belongs to the protein kinase superfamily. Ser/Thr protein kinase family. As to expression, expressed in the vascular strands of cotyledons, the shoot apex, hypocotyls, roots, leaves, stems and flowers.

It localises to the cell membrane. In terms of biological role, leucine-rich repeat receptor-like protein kinase that may play a role in vascular tissues development. The chain is Leucine-rich repeat receptor-like protein kinase PXC2 from Arabidopsis thaliana (Mouse-ear cress).